Consider the following 216-residue polypeptide: Pyrrolidone-carboxylate peptidase (216 aa).

Residues Glu80, Cys143, and His168 contribute to the active site.

This sequence belongs to the peptidase C15 family. Homotetramer.

The protein resides in the cytoplasm. It carries out the reaction Release of an N-terminal pyroglutamyl group from a polypeptide, the second amino acid generally not being Pro.. Removes 5-oxoproline from various penultimate amino acid residues except L-proline. The polypeptide is Pyrrolidone-carboxylate peptidase (Cupriavidus pinatubonensis (strain JMP 134 / LMG 1197) (Cupriavidus necator (strain JMP 134))).